The following is an 892-amino-acid chain: Alanine--tRNA ligase (892 aa).

Residues His-596, His-600, Cys-700, and His-704 each coordinate Zn(2+).

It belongs to the class-II aminoacyl-tRNA synthetase family. Requires Zn(2+) as cofactor.

It is found in the cytoplasm. The enzyme catalyses tRNA(Ala) + L-alanine + ATP = L-alanyl-tRNA(Ala) + AMP + diphosphate. Its function is as follows. Catalyzes the attachment of alanine to tRNA(Ala) in a two-step reaction: alanine is first activated by ATP to form Ala-AMP and then transferred to the acceptor end of tRNA(Ala). Also edits incorrectly charged Ser-tRNA(Ala) and Gly-tRNA(Ala) via its editing domain. The polypeptide is Alanine--tRNA ligase (Methanococcus maripaludis (strain DSM 14266 / JCM 13030 / NBRC 101832 / S2 / LL)).